The sequence spans 313 residues: MGNELQHRTVLLDEAVESLVTRPDGIYVDGTFGRGGHSRAVLARLGPAGRLIAFDKDPRAIETAQGIGDARFSIVHDSFASMRDALAARGIEKVSGVLLDLGVSSPQVDDPARGFSFRADGPLDMRMDPTRGESAAEWLARASLQELTEVIRDYGEERFAFQIAKALVARRAESDRLGPLDSTGELAQIVGHVVKTREKGKDPATRTFQAIRIHVNQELADLQVVLDAALSLLEQGGRLVVISFHSLEDRIVKRFMQAHASAPAVDRRLPIRAVDLPSPPLKIIGRQFPSEAEVAANPRARSAVMRIAERLTP.

Residues 35–37 (GGH), Asp-55, Phe-79, Asp-100, and Gln-107 each bind S-adenosyl-L-methionine.

It belongs to the methyltransferase superfamily. RsmH family.

It is found in the cytoplasm. The catalysed reaction is cytidine(1402) in 16S rRNA + S-adenosyl-L-methionine = N(4)-methylcytidine(1402) in 16S rRNA + S-adenosyl-L-homocysteine + H(+). Specifically methylates the N4 position of cytidine in position 1402 (C1402) of 16S rRNA. The chain is Ribosomal RNA small subunit methyltransferase H from Burkholderia multivorans (strain ATCC 17616 / 249).